Consider the following 469-residue polypeptide: Ribosomal protein uS12 methylthiotransferase RimO (469 aa).

One can recognise an MTTase N-terminal domain in the interval 17–132 (PRVGFVSLGC…VMDAVHLNLP (116 aa)). 6 residues coordinate [4Fe-4S] cluster: cysteine 26, cysteine 62, cysteine 91, cysteine 167, cysteine 171, and cysteine 174. Positions 153-395 (LTPKHYAYLK…AVAEEVSSLK (243 aa)) constitute a Radical SAM core domain. The 73-residue stretch at 397–469 (QQRVGATMQV…QGHDLVAIPV (73 aa)) folds into the TRAM domain.

It belongs to the methylthiotransferase family. RimO subfamily. [4Fe-4S] cluster is required as a cofactor.

It is found in the cytoplasm. It catalyses the reaction L-aspartate(89)-[ribosomal protein uS12]-hydrogen + (sulfur carrier)-SH + AH2 + 2 S-adenosyl-L-methionine = 3-methylsulfanyl-L-aspartate(89)-[ribosomal protein uS12]-hydrogen + (sulfur carrier)-H + 5'-deoxyadenosine + L-methionine + A + S-adenosyl-L-homocysteine + 2 H(+). Its function is as follows. Catalyzes the methylthiolation of an aspartic acid residue of ribosomal protein uS12. In Polaromonas sp. (strain JS666 / ATCC BAA-500), this protein is Ribosomal protein uS12 methylthiotransferase RimO.